The sequence spans 415 residues: Serine hydroxymethyltransferase (415 aa).

(6S)-5,6,7,8-tetrahydrofolate contacts are provided by residues Leu-121 and 125-127 (GHL). Lys-230 carries the N6-(pyridoxal phosphate)lysine modification. 355–357 (SPF) contacts (6S)-5,6,7,8-tetrahydrofolate.

The protein belongs to the SHMT family. Homodimer. Pyridoxal 5'-phosphate is required as a cofactor.

The protein resides in the cytoplasm. The enzyme catalyses (6R)-5,10-methylene-5,6,7,8-tetrahydrofolate + glycine + H2O = (6S)-5,6,7,8-tetrahydrofolate + L-serine. The protein operates within one-carbon metabolism; tetrahydrofolate interconversion. Its pathway is amino-acid biosynthesis; glycine biosynthesis; glycine from L-serine: step 1/1. Catalyzes the reversible interconversion of serine and glycine with tetrahydrofolate (THF) serving as the one-carbon carrier. This reaction serves as the major source of one-carbon groups required for the biosynthesis of purines, thymidylate, methionine, and other important biomolecules. Also exhibits THF-independent aldolase activity toward beta-hydroxyamino acids, producing glycine and aldehydes, via a retro-aldol mechanism. In Lactococcus lactis subsp. cremoris (strain SK11), this protein is Serine hydroxymethyltransferase.